We begin with the raw amino-acid sequence, 146 residues long: Large ribosomal subunit protein uL11 (146 aa).

Belongs to the universal ribosomal protein uL11 family. In terms of assembly, part of the ribosomal stalk of the 50S ribosomal subunit. Interacts with L10 and the large rRNA to form the base of the stalk. L10 forms an elongated spine to which L12 dimers bind in a sequential fashion forming a multimeric L10(L12)X complex. One or more lysine residues are methylated.

Forms part of the ribosomal stalk which helps the ribosome interact with GTP-bound translation factors. This Treponema pallidum subsp. pallidum (strain SS14) protein is Large ribosomal subunit protein uL11.